The chain runs to 79 residues: Protein RALF-like 15 (79 aa).

The first 28 residues, 1 to 28, serve as a signal peptide directing secretion; the sequence is MGMSKSIKVIVSLALILFLALAATKVEA. Cystine bridges form between Cys46–Cys54 and Cys66–Cys72.

The protein belongs to the plant rapid alkalinization factor (RALF) family.

It is found in the secreted. Its function is as follows. Cell signaling peptide that may regulate plant stress, growth, and development. Mediates a rapid alkalinization of extracellular space by mediating a transient increase in the cytoplasmic Ca(2+) concentration leading to a calcium-dependent signaling events through a cell surface receptor and a concomitant activation of some intracellular mitogen-activated protein kinases. The sequence is that of Protein RALF-like 15 (RALFL15) from Arabidopsis thaliana (Mouse-ear cress).